The sequence spans 264 residues: Thiazole synthase (264 aa).

The active-site Schiff-base intermediate with DXP is lysine 106. Residues glycine 167, 193-194 (AG), and 215-216 (NS) each bind 1-deoxy-D-xylulose 5-phosphate.

It belongs to the ThiG family. Homotetramer. Forms heterodimers with either ThiH or ThiS.

Its subcellular location is the cytoplasm. It catalyses the reaction [ThiS sulfur-carrier protein]-C-terminal-Gly-aminoethanethioate + 2-iminoacetate + 1-deoxy-D-xylulose 5-phosphate = [ThiS sulfur-carrier protein]-C-terminal Gly-Gly + 2-[(2R,5Z)-2-carboxy-4-methylthiazol-5(2H)-ylidene]ethyl phosphate + 2 H2O + H(+). It participates in cofactor biosynthesis; thiamine diphosphate biosynthesis. Its function is as follows. Catalyzes the rearrangement of 1-deoxy-D-xylulose 5-phosphate (DXP) to produce the thiazole phosphate moiety of thiamine. Sulfur is provided by the thiocarboxylate moiety of the carrier protein ThiS. In vitro, sulfur can be provided by H(2)S. This is Thiazole synthase from Azotobacter vinelandii (strain DJ / ATCC BAA-1303).